Here is a 227-residue protein sequence, read N- to C-terminus: Phosphoribosylformylglycinamidine synthase subunit PurQ (227 aa).

A Glutamine amidotransferase type-1 domain is found at 3–225 (FAVIVFPGSN…LRNWRESHVV (223 aa)). Catalysis depends on Cys-86, which acts as the Nucleophile. Active-site residues include His-194 and Glu-196.

In terms of assembly, part of the FGAM synthase complex composed of 1 PurL, 1 PurQ and 2 PurS subunits.

The protein localises to the cytoplasm. The catalysed reaction is N(2)-formyl-N(1)-(5-phospho-beta-D-ribosyl)glycinamide + L-glutamine + ATP + H2O = 2-formamido-N(1)-(5-O-phospho-beta-D-ribosyl)acetamidine + L-glutamate + ADP + phosphate + H(+). It catalyses the reaction L-glutamine + H2O = L-glutamate + NH4(+). The protein operates within purine metabolism; IMP biosynthesis via de novo pathway; 5-amino-1-(5-phospho-D-ribosyl)imidazole from N(2)-formyl-N(1)-(5-phospho-D-ribosyl)glycinamide: step 1/2. Functionally, part of the phosphoribosylformylglycinamidine synthase complex involved in the purines biosynthetic pathway. Catalyzes the ATP-dependent conversion of formylglycinamide ribonucleotide (FGAR) and glutamine to yield formylglycinamidine ribonucleotide (FGAM) and glutamate. The FGAM synthase complex is composed of three subunits. PurQ produces an ammonia molecule by converting glutamine to glutamate. PurL transfers the ammonia molecule to FGAR to form FGAM in an ATP-dependent manner. PurS interacts with PurQ and PurL and is thought to assist in the transfer of the ammonia molecule from PurQ to PurL. The protein is Phosphoribosylformylglycinamidine synthase subunit PurQ of Halalkalibacterium halodurans (strain ATCC BAA-125 / DSM 18197 / FERM 7344 / JCM 9153 / C-125) (Bacillus halodurans).